Reading from the N-terminus, the 305-residue chain is tRNA pseudouridine synthase B (305 aa).

Residue D48 is the Nucleophile of the active site.

The protein belongs to the pseudouridine synthase TruB family. Type 1 subfamily.

The enzyme catalyses uridine(55) in tRNA = pseudouridine(55) in tRNA. Responsible for synthesis of pseudouridine from uracil-55 in the psi GC loop of transfer RNAs. The polypeptide is tRNA pseudouridine synthase B (Pseudomonas fluorescens (strain ATCC BAA-477 / NRRL B-23932 / Pf-5)).